The primary structure comprises 391 residues: Small ribosomal subunit protein mS29 (391 aa).

The transit peptide at 1–17 (MLTGITRLFSRVQKLDP) directs the protein to the mitochondrion. A disordered region spans residues 30–59 (NSQVPAERPRTVSRTSDSDPAKHGEQHEGQ). Positions 45–59 (SDSDPAKHGEQHEGQ) are enriched in basic and acidic residues. Residues Lys-168 and Lys-200 each carry the N6-acetyllysine modification.

Belongs to the mitochondrion-specific ribosomal protein mS29 family. Component of the mitochondrial ribosome small subunit (28S) which comprises a 12S rRNA and about 30 distinct proteins. Interacts with DELE1. Interacts with NOA1.

It is found in the mitochondrion. The enzyme catalyses GTP + H2O = GDP + phosphate + H(+). Its function is as follows. As a component of the mitochondrial small ribosomal subunit, it plays a role in the translation of mitochondrial mRNAs. Involved in mediating interferon-gamma-induced cell death. Displays GTPase activity in vitro. This is Small ribosomal subunit protein mS29 from Mus musculus (Mouse).